Consider the following 388-residue polypeptide: Processive diacylglycerol beta-glucosyltransferase (388 aa).

The protein belongs to the glycosyltransferase 28 family. UgtP subfamily.

It localises to the cell membrane. It carries out the reaction a 1,2-diacyl-3-O-(beta-D-glucopyranosyl)-sn-glycerol + UDP-alpha-D-glucose = a 1,2-diacyl-3-O-(beta-D-Glc-(1-&gt;6)-beta-D-Glc)-sn-glycerol + UDP + H(+). The catalysed reaction is a 1,2-diacyl-3-O-(beta-D-Glc-(1-&gt;6)-beta-D-Glc)-sn-glycerol + UDP-alpha-D-glucose = a 1,2-diacyl-3-O-(beta-D-Glc-(1-&gt;6)-beta-D-Glc-(1-&gt;6)-beta-D-Glc)-sn-glycerol + UDP + H(+). The enzyme catalyses a 1,2-diacyl-sn-glycerol + UDP-alpha-D-glucose = a 1,2-diacyl-3-O-(beta-D-glucopyranosyl)-sn-glycerol + UDP + H(+). It participates in glycolipid metabolism; diglucosyl-diacylglycerol biosynthesis. Its function is as follows. Processive glucosyltransferase involved in the biosynthesis of both the bilayer- and non-bilayer-forming membrane glucolipids. Is able to successively transfer up to three glucosyl residues to diacylglycerol (DAG), thereby catalyzing the formation of beta-monoglucosyl-DAG (3-O-(beta-D-glucopyranosyl)-1,2-diacyl-sn-glycerol), beta-diglucosyl-DAG (3-O-(beta-D-glucopyranosyl-beta-(1-&gt;6)-D-glucopyranosyl)-1,2-diacyl-sn-glycerol) and beta-triglucosyl-DAG (3-O-(beta-D-glucopyranosyl-beta-(1-&gt;6)-D-glucopyranosyl-beta-(1-&gt;6)-D-glucopyranosyl)-1,2-diacyl-sn-glycerol). Beta-diglucosyl-DAG is the predominant glycolipid found in Bacillales and is also used as a membrane anchor for lipoteichoic acid (LTA). In Bacillus cereus (strain ZK / E33L), this protein is Processive diacylglycerol beta-glucosyltransferase.